The following is a 115-amino-acid chain: U3-lycotoxin-Ls1b (115 aa).

The first 20 residues, 1-20, serve as a signal peptide directing secretion; sequence MKFVLLFGVLLVTLFSYSSA. The propeptide occupies 21-44; that stretch reads EMLDDFDQADEDELLSLIEKEEAR. 4 cysteine pairs are disulfide-bonded: Cys48-Cys63, Cys55-Cys72, Cys62-Cys87, and Cys74-Cys85.

Belongs to the neurotoxin 19 (CSTX) family. 01 subfamily. In terms of tissue distribution, expressed by the venom gland.

The protein resides in the secreted. The sequence is that of U3-lycotoxin-Ls1b from Lycosa singoriensis (Wolf spider).